The sequence spans 179 residues: ADP-ribosylation factor-like protein 5A (179 aa).

Gly2 carries the N-myristoyl glycine lipid modification. Residues 23 to 30 (GLDNAGKT), 66 to 70 (DIGGQ), 125 to 128 (NKQD), and Ala159 contribute to the GTP site.

It belongs to the small GTPase superfamily. Arf family.

Functionally, lacks ADP-ribosylation enhancing activity. This chain is ADP-ribosylation factor-like protein 5A (ARL5A), found in Homo sapiens (Human).